A 460-amino-acid polypeptide reads, in one-letter code: GTPase Der (460 aa).

EngA-type G domains lie at 21 to 187 and 198 to 373; these read PRVV…FSVD and VRLA…AQLN. GTP contacts are provided by residues 27-34, 74-78, 141-144, 204-211, 251-255, and 316-319; these read GRPNVGKS, DTSGF, NKTE, GKPNTGKS, DTAGI, and NKWD. A KH-like domain is found at 374–457; the sequence is TKVETSALNT…PVKLTIRKNC (84 aa).

This sequence belongs to the TRAFAC class TrmE-Era-EngA-EngB-Septin-like GTPase superfamily. EngA (Der) GTPase family. In terms of assembly, associates with the 50S ribosomal subunit.

Its function is as follows. GTPase that plays an essential role in the late steps of ribosome biogenesis. The protein is GTPase Der of Treponema pallidum subsp. pallidum (strain SS14).